The primary structure comprises 422 residues: Glutamyl-tRNA reductase (422 aa).

Substrate is bound by residues 49–52 (TCNR), S107, 112–114 (EPQ), and Q118. Residue C50 is the Nucleophile of the active site. 187-192 (GAGETI) lines the NADP(+) pocket.

Belongs to the glutamyl-tRNA reductase family. As to quaternary structure, homodimer.

The enzyme catalyses (S)-4-amino-5-oxopentanoate + tRNA(Glu) + NADP(+) = L-glutamyl-tRNA(Glu) + NADPH + H(+). It participates in porphyrin-containing compound metabolism; protoporphyrin-IX biosynthesis; 5-aminolevulinate from L-glutamyl-tRNA(Glu): step 1/2. Catalyzes the NADPH-dependent reduction of glutamyl-tRNA(Glu) to glutamate 1-semialdehyde (GSA). This Pseudomonas aeruginosa (strain ATCC 15692 / DSM 22644 / CIP 104116 / JCM 14847 / LMG 12228 / 1C / PRS 101 / PAO1) protein is Glutamyl-tRNA reductase.